We begin with the raw amino-acid sequence, 153 residues long: Carbohydrate-binding protein AWN (153 aa).

Residues 1 to 20 form the signal peptide; it reads MKLAAPSLALLLSTATLVSG. Ala-21 carries the post-translational modification N-acetylalanine. Disulfide bonds link Cys-29/Cys-50 and Cys-73/Cys-94. Residues 29 to 130 enclose the CUB domain; it reads CGGVLRDPPG…SPFHIYYYAD (102 aa). Positions 93 to 130 are heparin-binding; it reads ICGGISLVFRSSSNIATIKYLRTSGQRASPFHIYYYAD.

The protein belongs to the spermadhesin family. In terms of processing, partial N-acetylation differentiates isoforms AWN-1 (not acetylated) and AWN-2 (acetylated).

It localises to the secreted. In terms of biological role, AWN proteins mediate the binding of boar spermatozoa to component(s) of the egg's zona pellucida by a carbohydrate-binding mechanism. Awn proteins are secretory components of the male accessory glands being coated to the sperm surface at the time of ejaculation. They possess as well heparin-, serine-protease-inhibitor-binding capability. This Sus scrofa (Pig) protein is Carbohydrate-binding protein AWN.